The following is a 422-amino-acid chain: Solanesyl diphosphate synthase 3, chloroplastic/mitochondrial (422 aa).

The N-terminal 32 residues, 1–32, are a transit peptide targeting the chloroplast and mitochondrion; the sequence is MLFTRSVARISSKFLRNRSFYGSSQSLASHRF. The isopentenyl diphosphate site is built by Lys-125, Arg-128, and His-174. Asp-181 and Asp-185 together coordinate Mg(2+). An an all-trans-polyprenyl diphosphate-binding site is contributed by Arg-190. Isopentenyl diphosphate is bound at residue Arg-191. Positions 267, 268, 305, and 322 each coordinate an all-trans-polyprenyl diphosphate.

It belongs to the FPP/GGPP synthase family. As to quaternary structure, homodimer. Requires Mg(2+) as cofactor. As to expression, ubiquitous. Highest expression in seeds and shoot apical meristem.

The protein resides in the plastid. It localises to the chloroplast. Its subcellular location is the mitochondrion. It catalyses the reaction 5 isopentenyl diphosphate + (2E,6E,10E)-geranylgeranyl diphosphate = all-trans-nonaprenyl diphosphate + 5 diphosphate. May be involved in the supply of solanesyl diphosphate for ubiquinone-9 (UQ-9) biosynthesis in mitochondria. Synthesizes C25 to C45 medium / long-chain products depending on the type of substrate available. Can use geranyl diphosphate, farnesyl diphosphate or geranylgeranyl diphosphate as substrates, but not dimethylallyl diphosphate. The sequence is that of Solanesyl diphosphate synthase 3, chloroplastic/mitochondrial from Arabidopsis thaliana (Mouse-ear cress).